The following is a 59-amino-acid chain: Large ribosomal subunit protein uL30 (59 aa).

This sequence belongs to the universal ribosomal protein uL30 family. In terms of assembly, part of the 50S ribosomal subunit.

The sequence is that of Large ribosomal subunit protein uL30 from Citrifermentans bemidjiense (strain ATCC BAA-1014 / DSM 16622 / JCM 12645 / Bem) (Geobacter bemidjiensis).